The primary structure comprises 369 residues: MKNAYYIGLMSGTSMDGVDAVLVDFSGPQPQLICSHTEAIPSHLLKGLQRLCLPGADEINRLGRLDRNVGQLFALAVNNLLAKCNIAKEDIIAIGSHGQTVRHMPNLEVGFTLQIGDPNTIATETGIDVIADFRRKDIALGGQGAPLVPAFHQQTFAEIGKKRIILNIGGIANVTYLPGTSEHVLGFDTGPGNTLIDAWIQHVKSEPFDKNGEWAASGKTNPDLLAQLLSHPYFSLAYPKSTGRELFNQAWLEQQLSPFNHLDEEDIQSTLLDMTCHSIARDVIKLSPEGELFVCGGGAFNTQLMQRLAALLPGYKLDTTSALGVDPKWAEGIAFAWLAMRNHLGLPANLPAVTGASREAVLGGRFSAK.

Position 12–19 (12–19 (GTSMDGVD)) interacts with ATP.

This sequence belongs to the anhydro-N-acetylmuramic acid kinase family.

It carries out the reaction 1,6-anhydro-N-acetyl-beta-muramate + ATP + H2O = N-acetyl-D-muramate 6-phosphate + ADP + H(+). Its pathway is amino-sugar metabolism; 1,6-anhydro-N-acetylmuramate degradation. It participates in cell wall biogenesis; peptidoglycan recycling. Catalyzes the specific phosphorylation of 1,6-anhydro-N-acetylmuramic acid (anhMurNAc) with the simultaneous cleavage of the 1,6-anhydro ring, generating MurNAc-6-P. Is required for the utilization of anhMurNAc either imported from the medium or derived from its own cell wall murein, and thus plays a role in cell wall recycling. This Shewanella sp. (strain W3-18-1) protein is Anhydro-N-acetylmuramic acid kinase.